Reading from the N-terminus, the 114-residue chain is Small ribosomal subunit protein uS15 (114 aa).

The protein belongs to the universal ribosomal protein uS15 family.

The protein is Small ribosomal subunit protein uS15 (RpS13) of Musca domestica (House fly).